Here is a 723-residue protein sequence, read N- to C-terminus: Threonine--tRNA ligase, mitochondrial (723 aa).

A Phosphoserine modification is found at serine 57. The 63-residue stretch at 64–126 (RTIKISLPEG…ETDCHLRFLT (63 aa)) folds into the TGS domain.

It belongs to the class-II aminoacyl-tRNA synthetase family. In terms of assembly, homodimer.

The protein resides in the mitochondrion matrix. The enzyme catalyses tRNA(Thr) + L-threonine + ATP = L-threonyl-tRNA(Thr) + AMP + diphosphate + H(+). In terms of biological role, catalyzes the attachment of threonine to tRNA(Thr) in a two-step reaction: threonine is first activated by ATP to form Thr-AMP and then transferred to the acceptor end of tRNA(Thr). Also edits incorrectly charged tRNA(Thr) via its editing domain. This chain is Threonine--tRNA ligase, mitochondrial (Tars2), found in Rattus norvegicus (Rat).